We begin with the raw amino-acid sequence, 196 residues long: Large ribosomal subunit protein eL15 (196 aa).

The disordered stretch occupies residues 154 to 196 (PGHRGRSERGLTSAGVKGRGMRRRGKGTEKCRPSVRANANRAK).

This sequence belongs to the eukaryotic ribosomal protein eL15 family.

This Methanospirillum hungatei JF-1 (strain ATCC 27890 / DSM 864 / NBRC 100397 / JF-1) protein is Large ribosomal subunit protein eL15.